The sequence spans 342 residues: Glycerol-3-phosphate dehydrogenase [NAD(P)+] (342 aa).

Trp11, Arg33, and Lys107 together coordinate NADPH. Positions 107, 143, and 145 each coordinate sn-glycerol 3-phosphate. Ala147 is an NADPH binding site. Residues Lys198, Asp251, Ser261, Arg262, and Asn263 each contribute to the sn-glycerol 3-phosphate site. Lys198 serves as the catalytic Proton acceptor. Arg262 provides a ligand contact to NADPH. NADPH contacts are provided by Val286 and Glu288.

This sequence belongs to the NAD-dependent glycerol-3-phosphate dehydrogenase family.

It localises to the cytoplasm. The catalysed reaction is sn-glycerol 3-phosphate + NAD(+) = dihydroxyacetone phosphate + NADH + H(+). It carries out the reaction sn-glycerol 3-phosphate + NADP(+) = dihydroxyacetone phosphate + NADPH + H(+). Its pathway is membrane lipid metabolism; glycerophospholipid metabolism. Its function is as follows. Catalyzes the reduction of the glycolytic intermediate dihydroxyacetone phosphate (DHAP) to sn-glycerol 3-phosphate (G3P), the key precursor for phospholipid synthesis. In Paracidovorax citrulli (strain AAC00-1) (Acidovorax citrulli), this protein is Glycerol-3-phosphate dehydrogenase [NAD(P)+].